Consider the following 614-residue polypeptide: MNNLIKSKLELLPTSPGCYIHKDKNGTIIYVGKAKNLRNRVRSYFRGSHDTKTEALVSEIVDFEFIVTESNIEALLLEINLIKENKPKYNIMLKDDKSYPFIKITNERYPRLIITRQVKKDGGLYFGPYPDVGAANEIKRLLDRIFPFRKCTNPPSKVCFYYHIGQCMAHTICKKDEAYFKSMAQEVSDFLKGQDNKIIDELKGKMAAAAQTMEFERAAEYRDLIQAIGTLRTKQRVMAKDLQNRDVFGYYVDKGWMCVQVFFVRQGKLIERDVNLFPYFNDPDEDFLTYVGQFYQEKSHLVPNEVLIPQDIDEEAVKALVDSKILKPQRGEKKQLVNLAIKNARVSLEQKFNLLEKSVEKTQGAIENLGRLLQIPTPVRIESFDNSNIMGTSPVSAMVVFVNGKPSKKDYRKYKIKTVVGPDDYASMREVIRRRYGRVQREALTPPDLIVIDGGQGQVNIAKQVIQEELGLDIPIAGLQKNDKHQTHELLFGDPLEVVDLSRNSQEFFLLQRIQDEVHRFAITFHRQLRSKNSFSSQLDGIDGLGPKRKQNLMKHFKSLTKIKEASVDEIVEVGVPRVVAEAVQRKLNPQGEALPQVAEERVDYQTEGNHNKP.

Residues Thr14 to Ile91 enclose the GIY-YIG domain. The 36-residue stretch at Asn196–Leu231 folds into the UVR domain. The disordered stretch occupies residues Leu595–Pro614.

This sequence belongs to the UvrC family. As to quaternary structure, interacts with UvrB in an incision complex.

It is found in the cytoplasm. Its function is as follows. The UvrABC repair system catalyzes the recognition and processing of DNA lesions. UvrC both incises the 5' and 3' sides of the lesion. The N-terminal half is responsible for the 3' incision and the C-terminal half is responsible for the 5' incision. The protein is UvrABC system protein C of Streptococcus pneumoniae (strain Taiwan19F-14).